We begin with the raw amino-acid sequence, 178 residues long: MTSLRPFTCDDLFRFNNINLDPLTETYGIPFYLQYLAHWPEYFIVAEAPGGELMGYIMGKAEGSVAREEWHGHVTALSVAPEFRRLGLAAKLMELLEEISERKGGFFVDLFVRVSNQVAVNMYKQLGYSVYRTVIEYYSASNGEPDEDAYDMRKALSRDTEKKSIVPLPHPVRPEDIE.

The 156-residue stretch at 2–157 (TSLRPFTCDD…DAYDMRKALS (156 aa)) folds into the N-acetyltransferase domain. The disordered stretch occupies residues 159–178 (DTEKKSIVPLPHPVRPEDIE).

It belongs to the acetyltransferase family. ARD1 subfamily. As to quaternary structure, component of the N-terminal acetyltransferase B (NatB) complex which is composed of naa20 and naa25.

The protein resides in the cytoplasm. It localises to the nucleus. The catalysed reaction is N-terminal L-methionyl-L-asparaginyl-[protein] + acetyl-CoA = N-terminal N(alpha)-acetyl-L-methionyl-L-asparaginyl-[protein] + CoA + H(+). It carries out the reaction N-terminal L-methionyl-L-glutaminyl-[protein] + acetyl-CoA = N-terminal N(alpha)-acetyl-L-methionyl-L-glutaminyl-[protein] + CoA + H(+). It catalyses the reaction N-terminal L-methionyl-L-aspartyl-[protein] + acetyl-CoA = N-terminal N(alpha)-acetyl-L-methionyl-L-aspartyl-[protein] + CoA + H(+). The enzyme catalyses N-terminal L-methionyl-L-glutamyl-[protein] + acetyl-CoA = N-terminal N(alpha)-acetyl-L-methionyl-L-glutamyl-[protein] + CoA + H(+). Functionally, catalytic subunit of the NatB complex which catalyzes acetylation of the N-terminal methionine residues of peptides beginning with Met-Asp, Met-Glu, Met-Asn and Met-Gln. Proteins with cell cycle functions are overrepresented in the pool of NatB substrates. Required for maintaining the structure and function of actomyosin fibers and for proper cellular migration. The chain is N-alpha-acetyltransferase 20 (naa20) from Xenopus tropicalis (Western clawed frog).